A 268-amino-acid polypeptide reads, in one-letter code: Tryptophan synthase alpha chain (268 aa).

Residues E49 and D60 each act as proton acceptor in the active site.

It belongs to the TrpA family. In terms of assembly, tetramer of two alpha and two beta chains.

The catalysed reaction is (1S,2R)-1-C-(indol-3-yl)glycerol 3-phosphate + L-serine = D-glyceraldehyde 3-phosphate + L-tryptophan + H2O. The protein operates within amino-acid biosynthesis; L-tryptophan biosynthesis; L-tryptophan from chorismate: step 5/5. In terms of biological role, the alpha subunit is responsible for the aldol cleavage of indoleglycerol phosphate to indole and glyceraldehyde 3-phosphate. In Haemophilus influenzae (strain 86-028NP), this protein is Tryptophan synthase alpha chain.